The chain runs to 509 residues: UDP-N-acetylmuramyl-tripeptide synthetase (509 aa).

Gly-124 to Ser-130 lines the ATP pocket. UDP-N-acetyl-alpha-D-muramoyl-L-alanyl-D-glutamate is bound by residues Thr-164–Thr-165, Ser-191, and Arg-199. The residue at position 231 (Lys-231) is an N6-carboxylysine.

The protein belongs to the MurCDEF family. MurE subfamily. Post-translationally, carboxylation is probably crucial for Mg(2+) binding and, consequently, for the gamma-phosphate positioning of ATP.

It localises to the cytoplasm. It functions in the pathway cell wall biogenesis; peptidoglycan biosynthesis. Functionally, catalyzes the addition of an amino acid to the nucleotide precursor UDP-N-acetylmuramoyl-L-alanyl-D-glutamate (UMAG) in the biosynthesis of bacterial cell-wall peptidoglycan. In Tropheryma whipplei (strain Twist) (Whipple's bacillus), this protein is UDP-N-acetylmuramyl-tripeptide synthetase.